The primary structure comprises 785 residues: ATP-dependent 6-phosphofructokinase 1 (785 aa).

An N-terminal catalytic PFK domain 1 region spans residues 1 to 389; sequence MATTHAPAEP…YHFAYKNTAT (389 aa). Residues Gly23, 86-87, and 116-119 each bind ATP; these read RS and GDGS. Asp117 is a binding site for Mg(2+). Residues 162 to 164, Arg199, 206 to 208, Glu263, Arg291, and 297 to 300 contribute to the substrate site; these read SID, MGR, and HTQR. Asp164 functions as the Proton acceptor in the catalytic mechanism. An interdomain linker region spans residues 390-403; that stretch reads PDHPKLILPENKRM. The tract at residues 404 to 785 is C-terminal regulatory PFK domain 2; that stretch reads RIAIIHVGAP…KTGWSCYENC (382 aa). Beta-D-fructose 2,6-bisphosphate is bound by residues Arg480, 537–541, Arg575, 582–584, Glu642, Arg668, 674–677, and Arg749; these read TISNN, QGG, and HFQQ.

Belongs to the phosphofructokinase type A (PFKA) family. ATP-dependent PFK group I subfamily. Eukaryotic two domain clade 'E' sub-subfamily. As to quaternary structure, homotetramer. It depends on Mg(2+) as a cofactor.

It is found in the cytoplasm. It catalyses the reaction beta-D-fructose 6-phosphate + ATP = beta-D-fructose 1,6-bisphosphate + ADP + H(+). It participates in carbohydrate degradation; glycolysis; D-glyceraldehyde 3-phosphate and glycerone phosphate from D-glucose: step 3/4. Allosterically activated by ADP, AMP, or fructose 2,6-bisphosphate, and allosterically inhibited by ATP or citrate. Catalyzes the phosphorylation of D-fructose 6-phosphate to fructose 1,6-bisphosphate by ATP, the first committing step of glycolysis. The polypeptide is ATP-dependent 6-phosphofructokinase 1 (pfkA) (Aspergillus oryzae (strain ATCC 42149 / RIB 40) (Yellow koji mold)).